We begin with the raw amino-acid sequence, 174 residues long: Transgelin (174 aa).

In terms of domain architecture, Calponin-homology (CH) spans 3–109; it reads SQLEKEAREW…SIHSFSRYAA (107 aa).

Binds to actin.

Its subcellular location is the cytoplasm. Its function is as follows. Has actin-binding and actin-bundling activity and is a component of the actin patch. Stabilizes actin filaments against disassembly. Cross-links F-actin and is required for the formation of the contractile F-actin ring. The polypeptide is Transgelin (stg1) (Schizosaccharomyces pombe (strain 972 / ATCC 24843) (Fission yeast)).